A 190-amino-acid chain; its full sequence is Orotate phosphoribosyltransferase (190 aa).

114–122 (EDVITTGGS) contacts 5-phospho-alpha-D-ribose 1-diphosphate. T118 and R146 together coordinate orotate.

Belongs to the purine/pyrimidine phosphoribosyltransferase family. PyrE subfamily. Homodimer. The cofactor is Mg(2+).

It carries out the reaction orotidine 5'-phosphate + diphosphate = orotate + 5-phospho-alpha-D-ribose 1-diphosphate. The protein operates within pyrimidine metabolism; UMP biosynthesis via de novo pathway; UMP from orotate: step 1/2. Catalyzes the transfer of a ribosyl phosphate group from 5-phosphoribose 1-diphosphate to orotate, leading to the formation of orotidine monophosphate (OMP). This is Orotate phosphoribosyltransferase from Pelotomaculum thermopropionicum (strain DSM 13744 / JCM 10971 / SI).